Reading from the N-terminus, the 118-residue chain is Vesicle-associated membrane protein 1 (118 aa).

Residues 1 to 15 (MSAPAQPPAEGTEGA) are compositionally biased toward low complexity. A disordered region spans residues 1-38 (MSAPAQPPAEGTEGAAPGGGPPGPPPNTTSNRRLQQTQ). The Cytoplasmic portion of the chain corresponds to 1–96 (MSAPAQPPAE…KRKYWWKNCK (96 aa)). Over residues 28–38 (TTSNRRLQQTQ) the composition is skewed to polar residues. Positions 33-93 (RLQQTQAQVE…AKLKRKYWWK (61 aa)) constitute a v-SNARE coiled-coil homology domain. Serine 63 is subject to Phosphoserine. A helical; Anchor for type IV membrane protein transmembrane segment spans residues 97 to 116 (MMIMLGAICAIIVVVIVIYI). The Vesicular portion of the chain corresponds to 117–118 (FT).

It belongs to the synaptobrevin family. As to quaternary structure, interacts with VAPA and VAPB. Post-translationally, (Microbial infection) Targeted and hydrolyzed by C.botulinum neurotoxin type D (BoNT/D, botD) which hydrolyzes the 61-Lys-|-Leu-62 bond and inhibits neurotransmitter release. This is a poor substrate for BoNT/D, high concentrations are required to cleave it in vitro. In terms of processing, (Microbial infection) Targeted and hydrolyzed by C.botulinum neurotoxin type F (BoNT/F, botF) which hydrolyzes the 60-Gln-|-Lys-61 bond and inhibits neurotransmitter release. As to expression, expressed in brain and spleen (at protein level). Isoform 1 expressed at very high level in brain. Even higher level found in spinal cord. Isoform 3 expressed in kidney, spleen and liver. Isoforms 2 and 3 expressed in osteoblasts of trabecular bone. Also expressed in heart.

It is found in the cytoplasmic vesicle. It localises to the secretory vesicle. Its subcellular location is the synaptic vesicle membrane. The protein localises to the synapse. The protein resides in the synaptosome. It is found in the cytoplasmic vesicle membrane. It localises to the mitochondrion outer membrane. Involved in the targeting and/or fusion of transport vesicles to their target membrane. The chain is Vesicle-associated membrane protein 1 (Vamp1) from Rattus norvegicus (Rat).